The chain runs to 466 residues: Ribulose bisphosphate carboxylase large chain (466 aa).

K4 carries the N6,N6,N6-trimethyllysine modification. 2 residues coordinate substrate: N113 and T163. The active-site Proton acceptor is the K165. Substrate is bound at residue K167. K191, D193, and E194 together coordinate Mg(2+). K191 carries the N6-carboxylysine modification. Residue H284 is the Proton acceptor of the active site. R285, H317, and S369 together coordinate substrate.

This sequence belongs to the RuBisCO large chain family. Type I subfamily. In terms of assembly, heterohexadecamer of 8 large chains and 8 small chains; disulfide-linked. The disulfide link is formed within the large subunit homodimers. Mg(2+) serves as cofactor. In terms of processing, the disulfide bond which can form in the large chain dimeric partners within the hexadecamer appears to be associated with oxidative stress and protein turnover.

It localises to the plastid. Its subcellular location is the chloroplast. It catalyses the reaction 2 (2R)-3-phosphoglycerate + 2 H(+) = D-ribulose 1,5-bisphosphate + CO2 + H2O. The catalysed reaction is D-ribulose 1,5-bisphosphate + O2 = 2-phosphoglycolate + (2R)-3-phosphoglycerate + 2 H(+). Its function is as follows. RuBisCO catalyzes two reactions: the carboxylation of D-ribulose 1,5-bisphosphate, the primary event in carbon dioxide fixation, as well as the oxidative fragmentation of the pentose substrate in the photorespiration process. Both reactions occur simultaneously and in competition at the same active site. The polypeptide is Ribulose bisphosphate carboxylase large chain (Aphelandra sinclairiana (Orange shrimp plant)).